Consider the following 312-residue polypeptide: Ribosomal RNA small subunit methyltransferase H (312 aa).

Residues 35–37, aspartate 55, phenylalanine 79, aspartate 101, and glutamine 108 each bind S-adenosyl-L-methionine; that span reads GGH.

The protein belongs to the methyltransferase superfamily. RsmH family.

Its subcellular location is the cytoplasm. It carries out the reaction cytidine(1402) in 16S rRNA + S-adenosyl-L-methionine = N(4)-methylcytidine(1402) in 16S rRNA + S-adenosyl-L-homocysteine + H(+). Functionally, specifically methylates the N4 position of cytidine in position 1402 (C1402) of 16S rRNA. The polypeptide is Ribosomal RNA small subunit methyltransferase H (Glaesserella parasuis serovar 5 (strain SH0165) (Haemophilus parasuis)).